We begin with the raw amino-acid sequence, 384 residues long: Calreticulin-3 (384 aa).

Positions 1 to 19 (MAAARVPLWAICVRRVALA) are cleaved as a signal peptide. The segment at 20–197 (TVYFQEEFLD…GQSIESGSIE (178 aa)) is N-domain. N-linked (GlcNAc...) asparagine glycosylation occurs at Asn42. An intrachain disulfide couples Cys105 to Cys137. The an alpha-D-glucoside site is built by Tyr109, Lys111, Tyr128, and Asp135. A run of 7 repeats spans residues 191–202 (IESGSIEYDWQL), 209–220 (EKASAEAEGWDQ), 222–231 (AKDKSQDWEK), 235–246 (DASASKPSDWKG), 250–260 (GDWQAAMLQKP), 264–272 (DGLKPEGID), and 274–284 (DVWLHQKMKNS). The segment at 191-246 (IESGSIEYDWQLTSLKKMEKASAEAEGWDQAAKDKSQDWEKHFLDASASKPSDWKG) is 4 X approximate repeats. A P-domain region spans residues 198–294 (YDWQLTSLKK…YLTEYDLSEF (97 aa)). The tract at residues 250-284 (GDWQAAMLQKPPYQDGLKPEGIDKDVWLHQKMKNS) is 3 X approximate repeats. Residues 295–384 (ENIGAVGLEL…FKGFHRRNEF (90 aa)) form a C-domain region. Glu303 serves as a coordination point for an alpha-D-glucoside. The short motif at 381-384 (RNEF) is the Prevents secretion from ER element.

Belongs to the calreticulin family. As to quaternary structure, component of an EIF2 complex at least composed of CELF1/CUGBP1, CALR, CALR3, EIF2S1, EIF2S2, HSP90B1 and HSPA5.

It localises to the endoplasmic reticulum lumen. Its function is as follows. During spermatogenesis, may act as a lectin-independent chaperone for specific client proteins such as ADAM3. CALR3 capacity for calcium-binding may be absent or much lower than that of CALR. Required for sperm fertility. The sequence is that of Calreticulin-3 (CALR3) from Bos taurus (Bovine).